We begin with the raw amino-acid sequence, 125 residues long: Probable 4-amino-4-deoxy-L-arabinose-phosphoundecaprenol flippase subunit ArnF (125 aa).

The Cytoplasmic portion of the chain corresponds to 1-2; it reads MG. The helical transmembrane segment at 3–23 threads the bilayer; that stretch reads VMWGLISVAIASLAQLSLGFA. Residues 24–33 lie on the Periplasmic side of the membrane; that stretch reads MMRLPSIAHP. A helical membrane pass occupies residues 34-54; the sequence is LAFISGLGALNAATLALFAGL. Topologically, residues 55–76 are cytoplasmic; sequence AGYLVSVFCWHKTLHTLALSKA. Residues 77–97 traverse the membrane as a helical segment; that stretch reads YALLSLSYVLVWVASMLLPGL. Topologically, residues 98 to 100 are periplasmic; that stretch reads QGA. Residues 101-121 traverse the membrane as a helical segment; that stretch reads FSLKAMLGVLCIMAGVMLIFL. The Cytoplasmic segment spans residues 122–125; the sequence is PARS.

Belongs to the ArnF family. Heterodimer of ArnE and ArnF.

The protein resides in the cell inner membrane. The protein operates within bacterial outer membrane biogenesis; lipopolysaccharide biosynthesis. Translocates 4-amino-4-deoxy-L-arabinose-phosphoundecaprenol (alpha-L-Ara4N-phosphoundecaprenol) from the cytoplasmic to the periplasmic side of the inner membrane. This Salmonella agona (strain SL483) protein is Probable 4-amino-4-deoxy-L-arabinose-phosphoundecaprenol flippase subunit ArnF.